Here is a 69-residue protein sequence, read N- to C-terminus: Putative membrane protein insertion efficiency factor (69 aa).

The protein belongs to the UPF0161 family.

Its subcellular location is the cell inner membrane. In terms of biological role, could be involved in insertion of integral membrane proteins into the membrane. This Magnetococcus marinus (strain ATCC BAA-1437 / JCM 17883 / MC-1) protein is Putative membrane protein insertion efficiency factor.